The following is a 380-amino-acid chain: mRNA cap guanine-N(7) methyltransferase (380 aa).

Residues 24 to 333 enclose the mRNA cap 0 methyltransferase domain; the sequence is SRIFFMRNMN…MYLVFGFRKK (310 aa). 33–34 contributes to the mRNA binding site; sequence NN. 6 residues coordinate S-adenosyl-L-methionine: Lys-37, Ala-62, Asp-84, Asp-117, Gln-139, and Tyr-144. The tract at residues 336 to 380 is disordered; the sequence is EAEKTEEEPATTKPVAESESEQKEVTESEEKEDQEDCEHQEAQTN.

It belongs to the class I-like SAM-binding methyltransferase superfamily. mRNA cap 0 methyltransferase family.

The protein localises to the nucleus. It carries out the reaction a 5'-end (5'-triphosphoguanosine)-ribonucleoside in mRNA + S-adenosyl-L-methionine = a 5'-end (N(7)-methyl 5'-triphosphoguanosine)-ribonucleoside in mRNA + S-adenosyl-L-homocysteine. MRNA-capping methyltransferase that methylates the N7 position of the added guanosine to the 5'-cap structure of mRNAs. Binds RNA containing 5'-terminal GpppC. In Caenorhabditis elegans, this protein is mRNA cap guanine-N(7) methyltransferase (tag-72).